The chain runs to 544 residues: Inosine-5'-monophosphate dehydrogenase (544 aa).

2 consecutive CBS domains span residues 132-192 (FITD…PIKS) and 194-250 (MTTE…PYAS). NAD(+)-binding positions include 288–290 (DSS) and 338–340 (GMG). G340 and G342 together coordinate K(+). S343 is an IMP binding site. C345 serves as a coordination point for K(+). Catalysis depends on C345, which acts as the Thioimidate intermediate. Residues 378–380 (DGG), 401–402 (GG), and 425–429 (YRGMG) contribute to the IMP site. Catalysis depends on R458, which acts as the Proton acceptor. Q470 provides a ligand contact to IMP. Residues E529, G530, and G531 each coordinate K(+).

The protein belongs to the IMPDH/GMPR family. Homotetramer. Requires K(+) as cofactor.

It is found in the cytoplasm. The catalysed reaction is IMP + NAD(+) + H2O = XMP + NADH + H(+). It participates in purine metabolism; XMP biosynthesis via de novo pathway; XMP from IMP: step 1/1. Its activity is regulated as follows. Mycophenolic acid (MPA) is a non-competitive inhibitor that prevents formation of the closed enzyme conformation by binding to the same site as the amobile flap. In contrast, mizoribine monophosphate (MZP) is a competitive inhibitor that induces the closed conformation. MPA is a potent inhibitor of mammalian IMPDHs but a poor inhibitor of the bacterial enzymes. MZP is a more potent inhibitor of bacterial IMPDH. Functionally, catalyzes the conversion of inosine 5'-phosphate (IMP) to xanthosine 5'-phosphate (XMP), the first committed and rate-limiting step in the de novo synthesis of guanine nucleotides, and therefore plays an important role in the regulation of cell growth. This Cryptococcus neoformans var. neoformans serotype D (strain JEC21 / ATCC MYA-565) (Filobasidiella neoformans) protein is Inosine-5'-monophosphate dehydrogenase.